The chain runs to 548 residues: Rhodopsin kinase GRK7 (548 aa).

Ser-34 carries the post-translational modification Phosphoserine; by PKA. Residues 54–171 form the RGS domain; the sequence is FHSLCEQQPI…LASPFYDRFL (118 aa). Residues 186–449 form the Protein kinase domain; the sequence is FTEFRVLGKG…ADDPRKHPFF (264 aa). Residues 192–200 and Lys-215 each bind ATP; that span reads LGKGGFGEV. Asp-311 (proton acceptor) is an active-site residue. The AGC-kinase C-terminal domain occupies 450 to 515; that stretch reads QTVNFPRLEA…GAVPVAWQEE (66 aa). Residues 523–548 are disordered; it reads EELNDPNRPSGDGKGDSSKSGVCLLL. Cys-545 is subject to Cysteine methyl ester. Cys-545 is lipidated: S-geranylgeranyl cysteine. A propeptide spans 546 to 548 (removed in mature form); that stretch reads LLL.

The protein belongs to the protein kinase superfamily. AGC Ser/Thr protein kinase family. GPRK subfamily. As to quaternary structure, interacts (when prenylated) with PDE6D; this promotes release from membranes. Autophosphorylated. Phosphorylation at Ser-34 is regulated by light and activated by cAMP. In terms of tissue distribution, retina. Cones and rod.

It is found in the membrane. The catalysed reaction is L-threonyl-[rhodopsin] + ATP = O-phospho-L-threonyl-[rhodopsin] + ADP + H(+). The enzyme catalyses L-seryl-[rhodopsin] + ATP = O-phospho-L-seryl-[rhodopsin] + ADP + H(+). Its activity is regulated as follows. Inhibited by phosphorylation of Ser-34. In terms of biological role, retina-specific kinase involved in the shutoff of the photoresponse and adaptation to changing light conditions via cone opsin phosphorylation, including rhodopsin (RHO). The protein is Rhodopsin kinase GRK7 (GRK7) of Ictidomys tridecemlineatus (Thirteen-lined ground squirrel).